A 487-amino-acid polypeptide reads, in one-letter code: UL37 immediate early glycoprotein (487 aa).

Positions 1-22 (MSPVYVNLLGSVGLLAFWYFSY) are cleaved as a signal peptide. The segment covering 83–107 (GEESVTEDTEREDTEEEREDEEEEN) has biased composition (acidic residues). The tract at residues 83–121 (GEESVTEDTEREDTEEEREDEEEENEARTPEVNPIDAEG) is disordered. Residues Asn206, Asn210, Asn219, Asn223, Asn242, Asn246, Asn275, Asn281, Asn294, Asn297, Asn306, Asn333, Asn337, Asn343, Asn379, Asn384, and Asn391 are each glycosylated (N-linked (GlcNAc...) asparagine; by host). A helical membrane pass occupies residues 433–459 (WALLSICTVAAGSIALLSLFCILLIGL).

Belongs to the immediate early glycoprotein family. Interacts with host BAX. Interacts with host RSAD2/viperin; this interaction results in RSAD2/viperin relocalization from the endoplasmic reticulum to the mitochondria, actin cytoskeleton disruption and enhancement of infection. Interacts with host PEX19; this interaction inhibits the peroxisomal-dependent antiviral signaling. Interacts with host CHCHD6; this interaction rewires mitochondria by engaging the conserved MICOS complex.

The protein localises to the host endoplasmic reticulum membrane. The protein resides in the host Golgi apparatus membrane. It is found in the host mitochondrion membrane. Its subcellular location is the host peroxisome. In terms of biological role, multifunctional transmembrane protein that plays several key roles in viral replication. Rapidely traffics from the host endoplasmic reticulum to the outer mitochondrial membrane where it acts to inhibit host immune response, block apoptotic signaling, regulate calcium flux, and induce mitochondrial fragmentation. Sequesters proapoptotic BAX at the outer mitochondrial membrane and prevents cytochrome c release and subsequent initiation of the proapoptotic cascade. Also provoques a calcium efflux from host endoplasmic reticulum and F-actin cytoskeleton disruption. Participates in the increase of host mitochondrial biogenesis, thus promoting viral replication by efficient use of newly made mitochondria. Additionally, a subset of vMIA localizes to peroxisomes, causing fragmentation and blocking peroxisomal MAVS signaling. Mechanistically, inhibits host MAVS oligomerization at peroxisomes in a mitochondrial fission factors (MFF)-dependent manner and in mitochondria independently of mitochondrial fission factors. Plays an essential role in the trafficking of host viperin/RSAD2 from the endoplasmic reticulum to the viral assembly compartment via the mitochondria during viral infection as failure of viperin to localize to the mitochondria results in insufficient lipogenesis and thus reduces viral replication. May play a role in escape from the host antiviral response. The sequence is that of UL37 immediate early glycoprotein (UL37) from Human cytomegalovirus (strain AD169) (HHV-5).